Here is a 253-residue protein sequence, read N- to C-terminus: 5-oxoprolinase subunit A (253 aa).

The protein belongs to the LamB/PxpA family. As to quaternary structure, forms a complex composed of PxpA, PxpB and PxpC.

It carries out the reaction 5-oxo-L-proline + ATP + 2 H2O = L-glutamate + ADP + phosphate + H(+). Catalyzes the cleavage of 5-oxoproline to form L-glutamate coupled to the hydrolysis of ATP to ADP and inorganic phosphate. This is 5-oxoprolinase subunit A from Bacillus cereus (strain ZK / E33L).